Here is a 182-residue protein sequence, read N- to C-terminus: PRKR-interacting protein 1 homolog (182 aa).

3 stretches are compositionally biased toward basic and acidic residues: residues 1–18 (MAVE…KKES), 27–43 (PAEE…RNPD), and 114–124 (IENQKAAEDRT). 2 disordered regions span residues 1–80 (MAVE…GEFH) and 114–182 (IENQ…MGKR). The segment at 51 to 143 (KPKEWNPRAP…LKQKKLMAKK (93 aa)) is required for RNA-binding. A coiled-coil region spans residues 99–157 (LSEKQKLDEEYKEKLIENQKAAEDRTAKRRKKREKLKQKKLMAKKAKMESQKEEDSEKS). The span at 125-143 (AKRRKKREKLKQKKLMAKK) shows a compositional bias: basic residues. The required for nuclear localization stretch occupies residues 126–138 (KRRKKREKLKQKK). Residues 144–156 (AKMESQKEEDSEK) are compositionally biased toward basic and acidic residues. The segment covering 164–173 (EGEEKDDDAE) has biased composition (acidic residues).

This sequence belongs to the PRKRIP1 family. Component of the pre-catalytic and post-catalytic spliceosome complexes.

It localises to the nucleus. The protein localises to the nucleolus. Required for pre-mRNA splicing as component of the spliceosome. Binds double-stranded RNA. The polypeptide is PRKR-interacting protein 1 homolog (prkrip1) (Danio rerio (Zebrafish)).